Reading from the N-terminus, the 135-residue chain is Antennal-specific protein OS-C (135 aa).

A signal peptide spans 1–27 (MGFHMGRQLLLSGFLLVMLQMVTQTQA). Positions 43 to 84 (VIKREGDDDGDDDDSSSEETVEDSEESRRRRREVNTDNTPSA) are disordered. Acidic residues predominate over residues 49–67 (DDDGDDDDSSSEETVEDSE).

As to expression, antenna. In the third antennal segment. Expressed in sencilla coeloconica.

In Drosophila melanogaster (Fruit fly), this protein is Antennal-specific protein OS-C (Os-C).